Consider the following 217-residue polypeptide: MTSLPFPLSPEPDEASREAGRLLFAGPCDFVKGVTTMEALPPADRIEVCFAGRSNVGKSSLINALTGRKALARASNTPGRTQEINYFALGPSRYLVDLPGYGYAEAPKPIVQRWQRLLKGYLAGRQTLRRAFVLIDTRHGVKSVDEEILTLLDRSAVTFQVVMTKADKVSQAEREAVLDQVRGALKKHPAAYPELVMTSSEKGMGIETLRTIVATLG.

Residues 44-217 (DRIEVCFAGR…TLRTIVATLG (174 aa)) form the EngB-type G domain. Residues 52 to 59 (GRSNVGKS), 79 to 83 (GRTQE), 97 to 100 (DLPG), 164 to 167 (TKAD), and 198 to 200 (TSS) contribute to the GTP site. Positions 59 and 81 each coordinate Mg(2+).

It belongs to the TRAFAC class TrmE-Era-EngA-EngB-Septin-like GTPase superfamily. EngB GTPase family. It depends on Mg(2+) as a cofactor.

In terms of biological role, necessary for normal cell division and for the maintenance of normal septation. The protein is Probable GTP-binding protein EngB of Cereibacter sphaeroides (strain ATCC 17023 / DSM 158 / JCM 6121 / CCUG 31486 / LMG 2827 / NBRC 12203 / NCIMB 8253 / ATH 2.4.1.) (Rhodobacter sphaeroides).